The following is a 156-amino-acid chain: MNFNATLIGQTVAFIIFVWFCMKFVWPPLMNAIEARQKRIADGLADADRAVKDLELAQAKATDQLKEAKVTANEIIEQANKRKAQIVEEAKAEADAERAKIIAQGKAEIEAERNRVKEDLRKQVATLAIMGAEKILERSIDPAAHSDIVNKLVAEI.

Residues 7–27 (LIGQTVAFIIFVWFCMKFVWP) traverse the membrane as a helical segment.

It belongs to the ATPase B chain family. In terms of assembly, F-type ATPases have 2 components, F(1) - the catalytic core - and F(0) - the membrane proton channel. F(1) has five subunits: alpha(3), beta(3), gamma(1), delta(1), epsilon(1). F(0) has three main subunits: a(1), b(2) and c(10-14). The alpha and beta chains form an alternating ring which encloses part of the gamma chain. F(1) is attached to F(0) by a central stalk formed by the gamma and epsilon chains, while a peripheral stalk is formed by the delta and b chains.

Its subcellular location is the cell inner membrane. In terms of biological role, f(1)F(0) ATP synthase produces ATP from ADP in the presence of a proton or sodium gradient. F-type ATPases consist of two structural domains, F(1) containing the extramembraneous catalytic core and F(0) containing the membrane proton channel, linked together by a central stalk and a peripheral stalk. During catalysis, ATP synthesis in the catalytic domain of F(1) is coupled via a rotary mechanism of the central stalk subunits to proton translocation. Component of the F(0) channel, it forms part of the peripheral stalk, linking F(1) to F(0). This Shewanella sp. (strain MR-4) protein is ATP synthase subunit b.